The following is a 664-amino-acid chain: Methionine--tRNA ligase (664 aa).

Positions 15–25 (YYPSGKLHIGH) match the 'HIGH' region motif. Residues 311 to 315 (KMSKS) carry the 'KMSKS' region motif. Position 314 (K314) interacts with ATP. The segment at 536–556 (MQGSAPAKEETKEEEPQEVDR) is disordered. One can recognise a tRNA-binding domain in the interval 570 to 662 (LRVAEVIEAE…IDQSLPKGTR (93 aa)).

The protein belongs to the class-I aminoacyl-tRNA synthetase family. MetG type 2B subfamily. As to quaternary structure, homodimer.

It is found in the cytoplasm. The catalysed reaction is tRNA(Met) + L-methionine + ATP = L-methionyl-tRNA(Met) + AMP + diphosphate. Functionally, is required not only for elongation of protein synthesis but also for the initiation of all mRNA translation through initiator tRNA(fMet) aminoacylation. This is Methionine--tRNA ligase (metG) from Bacillus subtilis (strain 168).